A 493-amino-acid polypeptide reads, in one-letter code: MDHNDNDLQGTNSSASLGGLDVRRRIPIKLISKQTNKTKPAPRAPRAMNRMPAKTQAGDEEEFDFNEEERYECKGGEMFGNQRRFPGPIFWDYKINLLGEKDDTPVHFCDKCGLPIKMYGRMIPCKHVFCYDCAILHEKKGDKMCPGCNEPVQRIEQCVRGSLFMCSIVQGCKRTYLSQRDLQAHINHRHMRAGKPVTRPPLEPVHPPIAPPPAEIPERFIMPPEKHHMSHIPPKQHIMMPPPPLQHVPHEHYNQPHEDIRPPPAEMSMAPPPPRPVSQDTFRISTRKHSNLITVPIQDDSNSGAREPPPPAPAPAHHHPEYQGQPVVTHPHHIMPPQQHYAPPPPPPPPISHPLQHPPQAAGTPHMVYSQAPPPPMTSAPPPITPPPGHIIAQMPPYMNHPPPGPPPPQHGGPPVNVSAPPPHHYNPNSLPQFSEDQGTLSPPFTQPGGMSPGIWPAPRGPPPPPRMQGPPAQAPLAGPHHPDQARYRPYYQ.

Disordered stretches follow at residues 1–20 (MDHN…LGGL) and 28–61 (IKLI…GDEE). Over residues 7–16 (DLQGTNSSAS) the composition is skewed to polar residues. Residues 109–149 (CDKCGLPIKMYGRMIPCKHVFCYDCAILHEKKGDKMCPGCN) form an RING-type zinc finger. The interval 148-206 (CNEPVQRIEQCVRGSLFMCSIVQGCKRTYLSQRDLQAHINHRHMRAGKPVTRPPLEPVH) is HYB domain. A C2H2-type zinc finger spans residues 164-190 (FMCSIVQGCKRTYLSQRDLQAHINHRH). The interval 253–493 (YNQPHEDIRP…DQARYRPYYQ (241 aa)) is disordered. 4 stretches are compositionally biased toward pro residues: residues 262–276 (PPPA…PPRP), 342–352 (APPPPPPPPIS), 372–389 (APPP…PPPG), and 399–412 (MNHP…PQHG). Positions 427–444 (NPNSLPQFSEDQGTLSPP) are enriched in polar residues. Positions 459-469 (PRGPPPPPRMQ) are enriched in pro residues. Low complexity predominate over residues 470 to 480 (GPPAQAPLAGP).

It belongs to the Hakai family. In terms of assembly, homodimer. Interacts with tyrosine-phosphorylated SRC substrates. Component of the WMM complex, a N6-methyltransferase complex composed of a catalytic subcomplex, named MAC, and of an associated subcomplex, named MACOM. Component of the MACOM subcomplex.

Its subcellular location is the nucleus speckle. It is found in the nucleus. The protein resides in the nucleoplasm. It catalyses the reaction S-ubiquitinyl-[E2 ubiquitin-conjugating enzyme]-L-cysteine + [acceptor protein]-L-lysine = [E2 ubiquitin-conjugating enzyme]-L-cysteine + N(6)-ubiquitinyl-[acceptor protein]-L-lysine.. It functions in the pathway protein modification; protein ubiquitination. In terms of biological role, E3 ubiquitin-protein ligase that mediates ubiquitination of several tyrosine-phosphorylated Src substrates. Associated component of the WMM complex, a complex that mediates N6-methyladenosine (m6A) methylation of RNAs, a modification that plays a role in the efficiency of mRNA splicing and RNA processing. This is E3 ubiquitin-protein ligase Hakai from Gallus gallus (Chicken).